Reading from the N-terminus, the 386-residue chain is Small ribosomal subunit protein mS31 (386 aa).

Belongs to the mitochondrion-specific ribosomal protein mS31 family. Component of the mitochondrial ribosome small subunit (28S) which comprises a 12S rRNA and about 30 distinct proteins.

Its subcellular location is the mitochondrion. This Bos taurus (Bovine) protein is Small ribosomal subunit protein mS31 (MRPS31).